Consider the following 208-residue polypeptide: uncharacterized protein (208 aa).

This is an uncharacterized protein from Legionella pneumophila subsp. pneumophila (strain Philadelphia 1 / ATCC 33152 / DSM 7513).